We begin with the raw amino-acid sequence, 504 residues long: L-amino-acid oxidase (504 aa).

Positions 1-18 (MNVFFMFSLLFLAALGSC) are cleaved as a signal peptide. A disulfide bond links Cys-28 and Cys-191. Residues 61–62 (MS), 81–82 (EA), Arg-89, and 105–108 (GPMR) each bind FAD. Arg-108 serves as a coordination point for substrate. Asn-190 is a glycosylation site (N-linked (GlcNAc...) asparagine). His-241 lines the substrate pocket. An FAD-binding site is contributed by Val-279. Cys-349 and Cys-430 are joined by a disulfide. N-linked (GlcNAc...) asparagine glycosylation is present at Asn-379. A substrate-binding site is contributed by Tyr-390. FAD contacts are provided by residues Glu-475 and 482–487 (GWIDST). 482 to 483 (GW) is a binding site for substrate.

It belongs to the flavin monoamine oxidase family. FIG1 subfamily. Homodimer; non-covalently linked. FAD is required as a cofactor. Expressed by the venom gland.

The protein resides in the secreted. It catalyses the reaction an L-alpha-amino acid + O2 + H2O = a 2-oxocarboxylate + H2O2 + NH4(+). The enzyme catalyses L-leucine + O2 + H2O = 4-methyl-2-oxopentanoate + H2O2 + NH4(+). In terms of biological role, catalyzes an oxidative deamination of predominantly hydrophobic and aromatic L-amino acids, thus producing hydrogen peroxide that may contribute to the diverse toxic effects of this enzyme. Shows activity on L-Leu. Exhibits diverse biological activities, such as hemorrhage, hemolysis, edema, antibacterial and antiparasitic activities, as well as regulation of platelet aggregation. Its effect on platelets is controversial, since it either induces aggregation or inhibits agonist-induced aggregation. These different effects are probably due to different experimental conditions. This protein induces apoptosis of cultured HeLa cells. The protein is L-amino-acid oxidase of Gloydius halys (Chinese water mocassin).